Here is a 233-residue protein sequence, read N- to C-terminus: MNTPSQLSLPLYLPDDETFASFFPGENATLLAAIKLAINQPHGSYIYFWSRDSGGRSHLLHAACAELSLKDEAVGYVPLDKRAYFIPEVLDGMEHLSLVCIDNIESIAGDEEWEMAIFNLYNRILEIGRTCLLISGDRPPRQINLKLPDLASRLDWGQIYKLQPLSDDEKLQALQLRAKLRGFELPEDVGRFLLKRLDREMRTLFMALNQLDHASIVAQRKLTIPFVKDILHL.

Belongs to the DnaA family. HdA subfamily. The active form seems to be an ADP-bound monomer. Forms the RIDA complex (regulatory inactivation of DnaA) of ATP-DnaA, ADP-Hda and the DNA-loaded beta sliding clamp (dnaN).

In terms of biological role, mediates the interaction of DNA replication initiator protein DnaA with DNA polymerase subunit beta sliding clamp (dnaN). Stimulates hydrolysis of ATP-DnaA to ADP-DnaA, rendering DnaA inactive for reinitiation, a process called regulatory inhibition of DnaA or RIDA. The sequence is that of DnaA regulatory inactivator Hda from Photorhabdus laumondii subsp. laumondii (strain DSM 15139 / CIP 105565 / TT01) (Photorhabdus luminescens subsp. laumondii).